Here is a 227-residue protein sequence, read N- to C-terminus: Cytidylate kinase (227 aa).

12–20 (GPSGAGKGT) provides a ligand contact to ATP.

Belongs to the cytidylate kinase family. Type 1 subfamily.

The protein localises to the cytoplasm. It carries out the reaction CMP + ATP = CDP + ADP. The enzyme catalyses dCMP + ATP = dCDP + ADP. In Salmonella arizonae (strain ATCC BAA-731 / CDC346-86 / RSK2980), this protein is Cytidylate kinase.